Consider the following 344-residue polypeptide: Protein RecA (344 aa).

Residue 65–72 participates in ATP binding; that stretch reads GPESSGKT. The span at 323 to 337 shows a compositional bias: basic and acidic residues; it reads ELREKFQPAEAPREA. The segment at 323 to 344 is disordered; the sequence is ELREKFQPAEAPREAGDDEDKE.

It belongs to the RecA family.

It is found in the cytoplasm. Functionally, can catalyze the hydrolysis of ATP in the presence of single-stranded DNA, the ATP-dependent uptake of single-stranded DNA by duplex DNA, and the ATP-dependent hybridization of homologous single-stranded DNAs. It interacts with LexA causing its activation and leading to its autocatalytic cleavage. This is Protein RecA from Xanthomonas euvesicatoria pv. vesicatoria (strain 85-10) (Xanthomonas campestris pv. vesicatoria).